The following is a 49-amino-acid chain: Large ribosomal subunit protein bL33A (49 aa).

This sequence belongs to the bacterial ribosomal protein bL33 family.

In Bacillus cytotoxicus (strain DSM 22905 / CIP 110041 / 391-98 / NVH 391-98), this protein is Large ribosomal subunit protein bL33A.